Reading from the N-terminus, the 338-residue chain is Tryptophan--tRNA ligase (338 aa).

Residues 11–13 and 19–20 contribute to the ATP site; these read QPS and GN. The 'HIGH' region signature appears at 12-20; that stretch reads PSGELSIGN. Position 135 (Asp135) interacts with L-tryptophan. ATP-binding positions include 147–149, Val189, and 198–202; these read GSD and KMSKS. Residues 198-202 carry the 'KMSKS' region motif; that stretch reads KMSKS.

This sequence belongs to the class-I aminoacyl-tRNA synthetase family. In terms of assembly, homodimer.

It localises to the cytoplasm. The enzyme catalyses tRNA(Trp) + L-tryptophan + ATP = L-tryptophyl-tRNA(Trp) + AMP + diphosphate + H(+). Catalyzes the attachment of tryptophan to tRNA(Trp). This chain is Tryptophan--tRNA ligase, found in Vibrio parahaemolyticus serotype O3:K6 (strain RIMD 2210633).